The chain runs to 269 residues: Auxin-responsive protein IAA26 (269 aa).

Over residues 25–40 the composition is skewed to basic and acidic residues; it reads YQEDKNNTDQEKKLEL. 2 disordered regions span residues 25-55 and 76-146; these read YQED…HSAI and CFNG…KQVE. Residues 38–42 carry the EAR-like (transcriptional repression) motif; the sequence is LELRL. 2 stretches are compositionally biased toward polar residues: residues 80-93 and 117-136; these read NHFS…SVPH and LAST…GQIN. Over residues 137–146 the composition is skewed to basic and acidic residues; it reads KSDDGEKQVE. The 100-residue stretch at 151–250 folds into the PB1 domain; it reads GMFVKINMDG…SVKRLRVIKS (100 aa).

This sequence belongs to the Aux/IAA family. Homodimers and heterodimers. Interacts with phytochrome A. Interacts with TPL.

It is found in the nucleus. Functionally, aux/IAA proteins are short-lived transcriptional factors that function as repressors of early auxin response genes at low auxin concentrations. Repression is thought to result from the interaction with auxin response factors (ARFs), proteins that bind to the auxin-responsive promoter element (AuxRE). Formation of heterodimers with ARF proteins may alter their ability to modulate early auxin response genes expression. The chain is Auxin-responsive protein IAA26 (IAA26) from Arabidopsis thaliana (Mouse-ear cress).